The chain runs to 384 residues: MAP kinase-activated protein kinase 3 (384 aa).

Met1 is modified (N-acetylmethionine). The tract at residues 1–33 (MDGETAGEKGSLVPPPGALGGSALGGAPAPGVR) is disordered. In terms of domain architecture, Protein kinase spans 46 to 306 (QLSKQVLGLG…IMQFMNHPWI (261 aa)). ATP contacts are provided by residues 52–60 (LGLGVNGKV) and Lys75. Residue Asp168 is the Proton acceptor of the active site. Thr203 carries the post-translational modification Phosphothreonine; by MAPK14. Phosphoserine; by MAPK14 is present on Ser253. Ser309 carries the phosphoserine; by autocatalysis modification. The interval 309–345 (SMVVPQTPLYTARVLQEDKDHWDDVKEEMTSALATMR) is autoinhibitory helix. Residue Thr315 is modified to Phosphothreonine; by MAPK14. A Nuclear export signal (NES) motif is present at residues 337–346 (MTSALATMRV). A p38 MAPK-binding site region spans residues 347 to 371 (DYDQVKIKDLKTSNNRLLNKRRKKQ). Short sequence motifs (bipartite nuclear localization signal) lie at residues 352 to 355 (KIKD) and 366 to 370 (KRRKK). The disordered stretch occupies residues 359-384 (SNNRLLNKRRKKQAGSSSASQGCNNQ). A compositionally biased stretch (polar residues) spans 372-384 (AGSSSASQGCNNQ).

Belongs to the protein kinase superfamily. CAMK Ser/Thr protein kinase family. In terms of assembly, heterodimer with p38-alpha/MAPK14. The heterodimer with p38-alpha/MAPK14 forms a stable complex: molecules are positioned 'face to face' so that the ATP-binding sites of both kinases are at the heterodimer interface. Interacts with TCF3 and with polycomb proteins, such as PCH2 and BMI1/PCGF4. In terms of processing, phosphorylated and activated by MAPK1/ERK2 and MAPK3/ERK1. Phosphorylated and activated by MAP kinase p38-alpha/MAPK14 at Thr-201, Ser-251 and Thr-313. Isoform 3 is degraded following phosphorylation at Thr-203. As to expression, ubiquitously expressed (at protein level). Isoform 3 is expressed in skeletal muscles and heart.

The protein localises to the nucleus. It is found in the cytoplasm. It carries out the reaction L-seryl-[protein] + ATP = O-phospho-L-seryl-[protein] + ADP + H(+). It catalyses the reaction L-threonyl-[protein] + ATP = O-phospho-L-threonyl-[protein] + ADP + H(+). With respect to regulation, activated following phosphorylation by p38-alpha/MAPK14 following various stresses. Inhibited by ligand 5B (2'-[2-(1,3-benzodioxol-5-yl)pyrimidin-4-yl]-5',6'-dihydrospiro[piperidine-4,7'-pyrrolo[3,2-c]pyridin]- 4'(1'h)-one) and ligand P4O (2-[2-(2-fluorophenyl)pyridin-4-yl]-1,5,6,7-tetrahydro- 4h-pyrrolo[3,2-c]pyridin-4-one), 2 ATP-competitive inhibitors. Stress-activated serine/threonine-protein kinase involved in cytokines production, endocytosis, cell migration, chromatin remodeling and transcriptional regulation. Following stress, it is phosphorylated and activated by MAP kinase p38-alpha/MAPK14, leading to phosphorylation of substrates. Phosphorylates serine in the peptide sequence, Hyd-X-R-X(2)-S, where Hyd is a large hydrophobic residue. MAPKAPK2 and MAPKAPK3, share the same function and substrate specificity, but MAPKAPK3 kinase activity and level in protein expression are lower compared to MAPKAPK2. Phosphorylates HSP27/HSPB1, KRT18, KRT20, RCSD1, RPS6KA3, TAB3 and TTP/ZFP36. Mediates phosphorylation of HSP27/HSPB1 in response to stress, leading to dissociate HSP27/HSPB1 from large small heat-shock protein (sHsps) oligomers and impair their chaperone activities and ability to protect against oxidative stress effectively. Involved in inflammatory response by regulating tumor necrosis factor (TNF) and IL6 production post-transcriptionally: acts by phosphorylating AU-rich elements (AREs)-binding proteins, such as TTP/ZFP36, leading to regulate the stability and translation of TNF and IL6 mRNAs. Phosphorylation of TTP/ZFP36, a major post-transcriptional regulator of TNF, promotes its binding to 14-3-3 proteins and reduces its ARE mRNA affinity leading to inhibition of dependent degradation of ARE-containing transcript. Involved in toll-like receptor signaling pathway (TLR) in dendritic cells: required for acute TLR-induced macropinocytosis by phosphorylating and activating RPS6KA3. Also acts as a modulator of Polycomb-mediated repression. The chain is MAP kinase-activated protein kinase 3 (Mapkapk3) from Mus musculus (Mouse).